The chain runs to 308 residues: Cytochrome b (308 aa).

The next 4 helical transmembrane spans lie at 1 to 21, 45 to 66, 81 to 101, and 146 to 166; these read SGSLLGMCLIVRIITGLFLAA, WLIRNLHANGASLFFICIYLHI, WNIGVILLLALMATAFVGYVL, and FFALHFLLPFVIAGLTLVHLT. Heme b contacts are provided by His51 and His65. The heme b site is built by His150 and His164. A ubiquinone is bound at residue His169. 3 helical membrane-spanning segments follow: residues 194 to 214, 256 to 276, and 288 to 308; these read TKDVLGFALLLTPLIALALFS, LGGVLALAASVLVLFLIPLLH, and LSQILFWALVANLLVLTWVGS.

It belongs to the cytochrome b family. As to quaternary structure, the cytochrome bc1 complex contains 11 subunits: 3 respiratory subunits (MT-CYB, CYC1 and UQCRFS1), 2 core proteins (UQCRC1 and UQCRC2) and 6 low-molecular weight proteins (UQCRH/QCR6, UQCRB/QCR7, UQCRQ/QCR8, UQCR10/QCR9, UQCR11/QCR10 and a cleavage product of UQCRFS1). This cytochrome bc1 complex then forms a dimer. The cofactor is heme b.

Its subcellular location is the mitochondrion inner membrane. In terms of biological role, component of the ubiquinol-cytochrome c reductase complex (complex III or cytochrome b-c1 complex) that is part of the mitochondrial respiratory chain. The b-c1 complex mediates electron transfer from ubiquinol to cytochrome c. Contributes to the generation of a proton gradient across the mitochondrial membrane that is then used for ATP synthesis. The polypeptide is Cytochrome b (MT-CYB) (Garritornis isidorei (Papuan babbler)).